The sequence spans 338 residues: Ornithine carbamoyltransferase (338 aa).

Ser2 is subject to N-acetylserine. Residues 67–70 (STRT), Arg118, His145, and Gln148 contribute to the carbamoyl phosphate site. The L-ornithine site is built by Asn185, Asp249, Ser253, and Met254. The active-site Proton acceptor is the Cys289. Carbamoyl phosphate-binding positions include 289-290 (CL) and Arg316.

The protein belongs to the aspartate/ornithine carbamoyltransferase superfamily. OTCase family. As to quaternary structure, interacts with CAR1.

It is found in the cytoplasm. The catalysed reaction is carbamoyl phosphate + L-ornithine = L-citrulline + phosphate + H(+). It participates in amino-acid biosynthesis; L-arginine biosynthesis; L-arginine from L-ornithine and carbamoyl phosphate: step 1/3. Its activity is regulated as follows. Forms a stable complex with CAR1 in the presence of ornithine and arginine. In this complex CAR1 retains activity, but ARG3 activity is inhibited. The sequence is that of Ornithine carbamoyltransferase (ARG3) from Saccharomyces cerevisiae (strain ATCC 204508 / S288c) (Baker's yeast).